The chain runs to 79 residues: Putative membrane protein insertion efficiency factor (79 aa).

The protein belongs to the UPF0161 family.

The protein localises to the cell inner membrane. In terms of biological role, could be involved in insertion of integral membrane proteins into the membrane. This Rippkaea orientalis (strain PCC 8801 / RF-1) (Cyanothece sp. (strain PCC 8801)) protein is Putative membrane protein insertion efficiency factor.